We begin with the raw amino-acid sequence, 279 residues long: Large ribosomal subunit protein uL2 (279 aa).

The tract at residues 222 to 279 (GVAMNPVDHPHGGGEGRTSGGRHPVTPAGKPTKGAKTRVNKATDKFIIRSRHKAKKGR) is disordered. Basic residues predominate over residues 269 to 279 (IRSRHKAKKGR).

Belongs to the universal ribosomal protein uL2 family. As to quaternary structure, part of the 50S ribosomal subunit. Forms a bridge to the 30S subunit in the 70S ribosome.

One of the primary rRNA binding proteins. Required for association of the 30S and 50S subunits to form the 70S ribosome, for tRNA binding and peptide bond formation. It has been suggested to have peptidyltransferase activity; this is somewhat controversial. Makes several contacts with the 16S rRNA in the 70S ribosome. This Caulobacter vibrioides (strain ATCC 19089 / CIP 103742 / CB 15) (Caulobacter crescentus) protein is Large ribosomal subunit protein uL2.